A 361-amino-acid chain; its full sequence is MSKFSFTIHSNYKKARSGVITTAHGKIRTPTFMPVGTRGTVKAMLTESVVETGADILLGNTYHLMLQPSAERIAYLGGLHKFMNWDKPILTDSGGFQVMSLSKLRKITEEGVSFRSHINGNKYMLTPEYSTEIQYLLGSTITMALDECTPYPSTFEEAKTSMNLTTRWANRSRDAFVKREGYAQFGIIQGSVYKELREQSVKDLVKFDFDGYAIGGLAVGEGQELMFKVLDYVSDFLPQNKPRYLMGVGKPADIIGAVSRGIDMFDCVIPTRSGRNGQAFTKYGTVNIRNSKYAEDKAPLEYDCKCPACTNYTKAYLHHLVRIREILGPMLMTWHNLTYFQNLMSRIRAYIKLGKDFDFVN.

Aspartate 92 acts as the Proton acceptor in catalysis. Residues 92–96, aspartate 146, glutamine 189, and glycine 216 each bind substrate; that span reads DSGGF. Residues 247–253 are RNA binding; the sequence is GVGKPAD. The Nucleophile role is filled by aspartate 266. Residues 271-275 form an RNA binding; important for wobble base 34 recognition region; that stretch reads TRSGR. Residues cysteine 304, cysteine 306, cysteine 309, and histidine 335 each contribute to the Zn(2+) site.

The protein belongs to the queuine tRNA-ribosyltransferase family. In terms of assembly, homodimer. Within each dimer, one monomer is responsible for RNA recognition and catalysis, while the other monomer binds to the replacement base PreQ1. Requires Zn(2+) as cofactor.

The catalysed reaction is 7-aminomethyl-7-carbaguanine + guanosine(34) in tRNA = 7-aminomethyl-7-carbaguanosine(34) in tRNA + guanine. It functions in the pathway tRNA modification; tRNA-queuosine biosynthesis. Catalyzes the base-exchange of a guanine (G) residue with the queuine precursor 7-aminomethyl-7-deazaguanine (PreQ1) at position 34 (anticodon wobble position) in tRNAs with GU(N) anticodons (tRNA-Asp, -Asn, -His and -Tyr). Catalysis occurs through a double-displacement mechanism. The nucleophile active site attacks the C1' of nucleotide 34 to detach the guanine base from the RNA, forming a covalent enzyme-RNA intermediate. The proton acceptor active site deprotonates the incoming PreQ1, allowing a nucleophilic attack on the C1' of the ribose to form the product. After dissociation, two additional enzymatic reactions on the tRNA convert PreQ1 to queuine (Q), resulting in the hypermodified nucleoside queuosine (7-(((4,5-cis-dihydroxy-2-cyclopenten-1-yl)amino)methyl)-7-deazaguanosine). This Rickettsia typhi (strain ATCC VR-144 / Wilmington) protein is Queuine tRNA-ribosyltransferase.